The sequence spans 778 residues: Aerobic respiration control sensor protein ArcB (778 aa).

The Cytoplasmic portion of the chain corresponds to 1–25; it reads MKQIRLLAQYYVDLMMKLGLVRFSM. The helical transmembrane segment at 26-46 threads the bilayer; sequence LLALALVVLAIVVQMAVTMVL. Residues 47–57 are Periplasmic-facing; sequence HGQVESIDVIR. A helical transmembrane segment spans residues 58–78; the sequence is SIFFGLLITPWAVYFLSVVVE. The Cytoplasmic segment spans residues 79-778; the sequence is QLEESRQRLS…KAWVAKATKK (700 aa). The region spanning 153–223 is the PAS domain; it reads QSSFLRSFLD…ETDEKVFRHN (71 aa). Positions 226–278 constitute a PAC domain; that stretch reads LTYEQWLDYPDGRKACFEIRKVPYYDRVGKRHGLMGFGRDITERKRYQDALER. Residues 289–507 enclose the Histidine kinase domain; it reads TISHELRTPL…TFTLTIHAPS (219 aa). Residue histidine 292 is modified to Phosphohistidine; by autocatalysis. The 117-residue stretch at 527–643 folds into the Response regulatory domain; it reads NVLLVEDIEL…ALTAMIKKFW (117 aa). 4-aspartylphosphate is present on aspartate 576. The region spanning 678–771 is the HPt domain; it reads GPKLITDGLA…RHDVEVLKAW (94 aa). Histidine 717 is subject to Phosphohistidine.

Activation requires a sequential transfer of a phosphate group from a His in the primary transmitter domain, to an Asp in the receiver domain and to a His in the secondary transmitter domain.

The protein resides in the cell inner membrane. It carries out the reaction ATP + protein L-histidine = ADP + protein N-phospho-L-histidine.. In terms of biological role, member of the two-component regulatory system ArcB/ArcA. Sensor-regulator protein for anaerobic repression of the arc modulon. Activates ArcA via a four-step phosphorelay. ArcB can also dephosphorylate ArcA by a reverse phosphorelay involving His-717 and Asp-576. In Escherichia coli (strain K12), this protein is Aerobic respiration control sensor protein ArcB (arcB).